The chain runs to 454 residues: Tol-Pal system protein TolB (454 aa).

A signal peptide spans 1 to 21; the sequence is MSLRPISLMLALLLTSAPALA.

This sequence belongs to the TolB family. The Tol-Pal system is composed of five core proteins: the inner membrane proteins TolA, TolQ and TolR, the periplasmic protein TolB and the outer membrane protein Pal. They form a network linking the inner and outer membranes and the peptidoglycan layer.

It is found in the periplasm. Part of the Tol-Pal system, which plays a role in outer membrane invagination during cell division and is important for maintaining outer membrane integrity. This chain is Tol-Pal system protein TolB, found in Sphingopyxis alaskensis (strain DSM 13593 / LMG 18877 / RB2256) (Sphingomonas alaskensis).